The following is a 196-amino-acid chain: Putative adenylate kinase (196 aa).

Residues glycine 10, glycine 12, lysine 13, threonine 14, and serine 15 each coordinate ATP. Residues 30–53 (YLNDLIKEEHLYSEVDEERDSVIA) form an NMP region. The interval 118 to 128 (KRGYSEEKINE) is LID. Arginine 119 is an ATP binding site.

The protein belongs to the adenylate kinase family. AK6 subfamily. As to quaternary structure, interacts with uS11. Not a structural component of 40S pre-ribosomes, but transiently interacts with them by binding to uS11.

The catalysed reaction is AMP + ATP = 2 ADP. It carries out the reaction ATP + H2O = ADP + phosphate + H(+). Functionally, broad-specificity nucleoside monophosphate (NMP) kinase that catalyzes the reversible transfer of the terminal phosphate group between nucleoside triphosphates and monophosphates. Also has ATPase activity. Involved in the late maturation steps of the 30S ribosomal particles, specifically 16S rRNA maturation. While NMP activity is not required for ribosome maturation, ATPase activity is. Associates transiently with small ribosomal subunit protein uS11. ATP hydrolysis breaks the interaction with uS11. May temporarily remove uS11 from the ribosome to enable a conformational change of the ribosomal RNA that is needed for the final maturation step of the small ribosomal subunit. The polypeptide is Putative adenylate kinase (Methanosarcina mazei (strain ATCC BAA-159 / DSM 3647 / Goe1 / Go1 / JCM 11833 / OCM 88) (Methanosarcina frisia)).